Reading from the N-terminus, the 144-residue chain is Large ribosomal subunit protein uL15 (144 aa).

The disordered stretch occupies residues 1-54; sequence MRLNTLSPAEGSKKAGKRLGRGIGSGLGKTGGRGHKGQKSRSGGGVRRGFEGGQ. The span at 21 to 31 shows a compositional bias: gly residues; the sequence is RGIGSGLGKTG.

It belongs to the universal ribosomal protein uL15 family. In terms of assembly, part of the 50S ribosomal subunit.

Binds to the 23S rRNA. In Klebsiella pneumoniae (strain 342), this protein is Large ribosomal subunit protein uL15.